Here is a 614-residue protein sequence, read N- to C-terminus: Dihydroxy-acid dehydratase 1 (614 aa).

Asp81 is a Mg(2+) binding site. Cys122 contacts [2Fe-2S] cluster. Mg(2+) is bound by residues Asp123 and Lys124. Lys124 is subject to N6-carboxylysine. Residue Cys195 coordinates [2Fe-2S] cluster. Glu491 serves as a coordination point for Mg(2+). The active-site Proton acceptor is the Ser517.

Belongs to the IlvD/Edd family. In terms of assembly, homodimer. [2Fe-2S] cluster serves as cofactor. Requires Mg(2+) as cofactor.

It catalyses the reaction (2R)-2,3-dihydroxy-3-methylbutanoate = 3-methyl-2-oxobutanoate + H2O. It carries out the reaction (2R,3R)-2,3-dihydroxy-3-methylpentanoate = (S)-3-methyl-2-oxopentanoate + H2O. The protein operates within amino-acid biosynthesis; L-isoleucine biosynthesis; L-isoleucine from 2-oxobutanoate: step 3/4. It functions in the pathway amino-acid biosynthesis; L-valine biosynthesis; L-valine from pyruvate: step 3/4. Functionally, functions in the biosynthesis of branched-chain amino acids. Catalyzes the dehydration of (2R,3R)-2,3-dihydroxy-3-methylpentanoate (2,3-dihydroxy-3-methylvalerate) into 2-oxo-3-methylpentanoate (2-oxo-3-methylvalerate) and of (2R)-2,3-dihydroxy-3-methylbutanoate (2,3-dihydroxyisovalerate) into 2-oxo-3-methylbutanoate (2-oxoisovalerate), the penultimate precursor to L-isoleucine and L-valine, respectively. This Mesorhizobium japonicum (strain LMG 29417 / CECT 9101 / MAFF 303099) (Mesorhizobium loti (strain MAFF 303099)) protein is Dihydroxy-acid dehydratase 1.